The sequence spans 428 residues: Probable pectin lyase F (428 aa).

Residues 1–20 (MVLLHPLLTAAALLGASARA) form the signal peptide. Cys-83 and Cys-107 form a disulfide bridge. The active site involves Arg-257. Asn-276 is a glycosylation site (N-linked (GlcNAc...) asparagine). The cysteines at positions 324 and 332 are disulfide-linked. 2 disordered regions span residues 337 to 367 (LTSSGELSGNDEAVLSGWPKGEGDTKAMTTD) and 383 to 428 (GSGG…HHHY). Residues 389–417 (AASSSASITPSPTSSAIPSSSATPSSSAY) are compositionally biased toward low complexity. A compositionally biased stretch (basic residues) spans 418 to 428 (ARRHYARHHHY).

Belongs to the polysaccharide lyase 1 family.

The protein localises to the secreted. It catalyses the reaction Eliminative cleavage of (1-&gt;4)-alpha-D-galacturonan methyl ester to give oligosaccharides with 4-deoxy-6-O-methyl-alpha-D-galact-4-enuronosyl groups at their non-reducing ends.. Its function is as follows. Pectinolytic enzymes consist of four classes of enzymes: pectin lyase, polygalacturonase, pectin methylesterase and rhamnogalacturonase. Among pectinolytic enzymes, pectin lyase is the most important in depolymerization of pectin, since it cleaves internal glycosidic bonds of highly methylated pectins. The sequence is that of Probable pectin lyase F (pelF) from Aspergillus flavus (strain ATCC 200026 / FGSC A1120 / IAM 13836 / NRRL 3357 / JCM 12722 / SRRC 167).